A 72-amino-acid polypeptide reads, in one-letter code: Large ribosomal subunit protein bL31 (72 aa).

Residues C16, C18, C38, and C41 each coordinate Zn(2+).

It belongs to the bacterial ribosomal protein bL31 family. Type A subfamily. Part of the 50S ribosomal subunit. Zn(2+) serves as cofactor.

Its function is as follows. Binds the 23S rRNA. The polypeptide is Large ribosomal subunit protein bL31 (Aliivibrio salmonicida (strain LFI1238) (Vibrio salmonicida (strain LFI1238))).